The primary structure comprises 356 residues: Phospho-N-acetylmuramoyl-pentapeptide-transferase (356 aa).

10 consecutive transmembrane segments (helical) span residues 3–23 (QILF…PLLI), 51–71 (TMGG…AKVI), 80–100 (GLLV…DDYI), 114–134 (AKMA…LQFP), 152–172 (FGWS…ILAM), 185–205 (LATG…LWQF), 227–247 (PLDL…FLWW), 254–274 (IFMG…LAIL), 279–299 (FLLA…VIQV), and 333–353 (FWII…AGWA).

It belongs to the glycosyltransferase 4 family. MraY subfamily. Mg(2+) is required as a cofactor.

It is found in the cell membrane. It catalyses the reaction UDP-N-acetyl-alpha-D-muramoyl-L-alanyl-gamma-D-glutamyl-meso-2,6-diaminopimeloyl-D-alanyl-D-alanine + di-trans,octa-cis-undecaprenyl phosphate = di-trans,octa-cis-undecaprenyl diphospho-N-acetyl-alpha-D-muramoyl-L-alanyl-D-glutamyl-meso-2,6-diaminopimeloyl-D-alanyl-D-alanine + UMP. Its pathway is cell wall biogenesis; peptidoglycan biosynthesis. Catalyzes the initial step of the lipid cycle reactions in the biosynthesis of the cell wall peptidoglycan: transfers peptidoglycan precursor phospho-MurNAc-pentapeptide from UDP-MurNAc-pentapeptide onto the lipid carrier undecaprenyl phosphate, yielding undecaprenyl-pyrophosphoryl-MurNAc-pentapeptide, known as lipid I. This Streptomyces griseus subsp. griseus (strain JCM 4626 / CBS 651.72 / NBRC 13350 / KCC S-0626 / ISP 5235) protein is Phospho-N-acetylmuramoyl-pentapeptide-transferase.